The primary structure comprises 21 residues: QFPTDYDEGQDDRPKLGLGAR.

At Gln1 the chain carries Pyrrolidone carboxylic acid. The span at 1-10 (QFPTDYDEGQ) shows a compositional bias: acidic residues. Positions 1–21 (QFPTDYDEGQDDRPKLGLGAR) are disordered. Thr4 carries an O-linked (GalNAc...) threonine glycan. Residue Tyr6 is modified to Sulfotyrosine.

In terms of assembly, heterohexamer; disulfide linked. Contains 2 sets of 3 non-identical chains (alpha, beta and gamma). The 2 heterotrimers are in head to head conformation with the N-termini in a small central domain. Post-translationally, conversion of fibrinogen to fibrin is triggered by thrombin, which cleaves fibrinopeptides A and B from alpha and beta chains, and thus exposes the N-terminal polymerization sites responsible for the formation of the soft clot.

Its subcellular location is the secreted. Functionally, cleaved by the protease thrombin to yield monomers which, together with fibrinogen alpha (FGA) and fibrinogen gamma (FGG), polymerize to form an insoluble fibrin matrix. Fibrin has a major function in hemostasis as one of the primary components of blood clots. In addition, functions during the early stages of wound repair to stabilize the lesion and guide cell migration during re-epithelialization. Was originally thought to be essential for platelet aggregation, based on in vitro studies using anticoagulated blood. However subsequent studies have shown that it is not absolutely required for thrombus formation in vivo. Enhances expression of SELP in activated platelets. Maternal fibrinogen is essential for successful pregnancy. Fibrin deposition is also associated with infection, where it protects against IFNG-mediated hemorrhage. May also facilitate the antibacterial immune response via both innate and T-cell mediated pathways. The chain is Fibrinogen beta chain (FGB) from Bubalus bubalis (Domestic water buffalo).